A 384-amino-acid chain; its full sequence is Cell division protein FtsZ (384 aa).

GTP-binding positions include 20–24 (GGGSN), 107–109 (GTG), Glu-138, Arg-142, and Asn-186.

It belongs to the FtsZ family. Homodimer. Polymerizes to form a dynamic ring structure in a strictly GTP-dependent manner. Interacts directly with several other division proteins.

The protein resides in the cytoplasm. Functionally, essential cell division protein that forms a contractile ring structure (Z ring) at the future cell division site. The regulation of the ring assembly controls the timing and the location of cell division. One of the functions of the FtsZ ring is to recruit other cell division proteins to the septum to produce a new cell wall between the dividing cells. Binds GTP and shows GTPase activity. The chain is Cell division protein FtsZ from Buchnera aphidicola subsp. Acyrthosiphon pisum (strain APS) (Acyrthosiphon pisum symbiotic bacterium).